Here is a 378-residue protein sequence, read N- to C-terminus: Glutamate 5-kinase (378 aa).

ATP is bound at residue Lys-21. 3 residues coordinate substrate: Ser-61, Asp-148, and Asn-160. 180-181 (TD) provides a ligand contact to ATP. Residues 286 to 364 (RGTLVLDAGA…RRIEELLGYM (79 aa)) form the PUA domain.

This sequence belongs to the glutamate 5-kinase family.

It is found in the cytoplasm. The catalysed reaction is L-glutamate + ATP = L-glutamyl 5-phosphate + ADP. The protein operates within amino-acid biosynthesis; L-proline biosynthesis; L-glutamate 5-semialdehyde from L-glutamate: step 1/2. Its function is as follows. Catalyzes the transfer of a phosphate group to glutamate to form L-glutamate 5-phosphate. The polypeptide is Glutamate 5-kinase (Chromohalobacter salexigens (strain ATCC BAA-138 / DSM 3043 / CIP 106854 / NCIMB 13768 / 1H11)).